Reading from the N-terminus, the 172-residue chain is R-phycocyanin-2 beta chain (172 aa).

At N72 the chain carries N4-methylasparagine. C82 is a (2R,3E)-phycocyanobilin binding site. A (2R,3E)-phycoerythrobilin-binding site is contributed by C153.

This sequence belongs to the phycobiliprotein family. As to quaternary structure, heterodimer of an alpha and a beta chain. Post-translationally, contains two covalently linked bilin chromophores.

The protein localises to the cellular thylakoid membrane. Light-harvesting photosynthetic bile pigment-protein from the phycobiliprotein complex. This chain is R-phycocyanin-2 beta chain (rpcB), found in Synechococcus sp. (strain WH8103).